A 557-amino-acid chain; its full sequence is Potassium-transporting ATPase potassium-binding subunit (557 aa).

The next 12 membrane-spanning stretches (helical) occupy residues 5-25 (GFLLIATFLLVLMVLARPLGS), 63-83 (LCAILGLNMLGLAVLFFMLLG), 132-152 (GLTVQNFLSAASGIAVIFALI), 170-190 (LLRITLWVLVPVALLIALFFI), 253-273 (FVQMLAIFLIPTALCFAFGEV), 283-303 (LLWAMSVIFVICVGVVMWAEV), 329-349 (VLVSSLFAVVTTAASCGAVIA), 356-376 (ALGGMVPMWLMQIGEVVFGGV), 379-399 (GLYGMMLFVLLAVFIAGLMIG), 416-436 (LTALAILVTPTLVLMGAALAM), 484-504 (LLAFCMFVGRFGVIIPVMAIA), and 526-546 (LFVGLLIGTVLLVGALTFIPA).

It belongs to the KdpA family. In terms of assembly, the system is composed of three essential subunits: KdpA, KdpB and KdpC.

It is found in the cell inner membrane. Functionally, part of the high-affinity ATP-driven potassium transport (or Kdp) system, which catalyzes the hydrolysis of ATP coupled with the electrogenic transport of potassium into the cytoplasm. This subunit binds the periplasmic potassium ions and delivers the ions to the membrane domain of KdpB through an intramembrane tunnel. In Escherichia coli (strain K12 / MC4100 / BW2952), this protein is Potassium-transporting ATPase potassium-binding subunit.